Reading from the N-terminus, the 248-residue chain is Probable transcriptional regulatory protein PsycPRwf_1013 (248 aa).

The protein belongs to the TACO1 family.

It localises to the cytoplasm. This chain is Probable transcriptional regulatory protein PsycPRwf_1013, found in Psychrobacter sp. (strain PRwf-1).